Here is a 428-residue protein sequence, read N- to C-terminus: Light-independent protochlorophyllide reductase subunit N (428 aa).

[4Fe-4S] cluster contacts are provided by Cys-16, Cys-41, and Cys-102.

It belongs to the BchN/ChlN family. In terms of assembly, protochlorophyllide reductase is composed of three subunits; ChlL, ChlN and ChlB. Forms a heterotetramer of two ChlB and two ChlN subunits. [4Fe-4S] cluster is required as a cofactor.

It catalyses the reaction chlorophyllide a + oxidized 2[4Fe-4S]-[ferredoxin] + 2 ADP + 2 phosphate = protochlorophyllide a + reduced 2[4Fe-4S]-[ferredoxin] + 2 ATP + 2 H2O. It functions in the pathway porphyrin-containing compound metabolism; chlorophyll biosynthesis (light-independent). Functionally, component of the dark-operative protochlorophyllide reductase (DPOR) that uses Mg-ATP and reduced ferredoxin to reduce ring D of protochlorophyllide (Pchlide) to form chlorophyllide a (Chlide). This reaction is light-independent. The NB-protein (ChlN-ChlB) is the catalytic component of the complex. The protein is Light-independent protochlorophyllide reductase subunit N of Synechococcus sp. (strain CC9311).